The sequence spans 120 residues: UPF0344 protein LMOf2365_2298 (120 aa).

The next 4 helical transmembrane spans lie at 3–23 (GYIH…ALLI), 33–53 (MLQM…IMMV), 62–82 (ILAI…EMLL), and 92–112 (GMFL…GFYL).

It belongs to the UPF0344 family.

It is found in the cell membrane. The chain is UPF0344 protein LMOf2365_2298 from Listeria monocytogenes serotype 4b (strain F2365).